The sequence spans 159 residues: Phosphopantetheine adenylyltransferase (159 aa).

Residue Thr10 coordinates substrate. Residues 10–11 and His18 each bind ATP; that span reads TF. Positions 42, 74, and 88 each coordinate substrate. Residues 89–91, Glu99, and 124–130 contribute to the ATP site; these read GLR and WSFISSS.

It belongs to the bacterial CoaD family. As to quaternary structure, homohexamer. Mg(2+) serves as cofactor.

The protein localises to the cytoplasm. It carries out the reaction (R)-4'-phosphopantetheine + ATP + H(+) = 3'-dephospho-CoA + diphosphate. Its pathway is cofactor biosynthesis; coenzyme A biosynthesis; CoA from (R)-pantothenate: step 4/5. Reversibly transfers an adenylyl group from ATP to 4'-phosphopantetheine, yielding dephospho-CoA (dPCoA) and pyrophosphate. This chain is Phosphopantetheine adenylyltransferase, found in Citrobacter koseri (strain ATCC BAA-895 / CDC 4225-83 / SGSC4696).